Consider the following 269-residue polypeptide: Chymotrypsin-like elastase family member 2B (269 aa).

The first 16 residues, 1 to 16, serve as a signal peptide directing secretion; that stretch reads MIRTLLLSTLVAGALS. Positions 17-28 are cleaved as a propeptide — activation peptide; that stretch reads CGVSTYAPDMSR. In terms of domain architecture, Peptidase S1 spans 29–267; sequence MLGGEEARPN…YNDWINSVIA (239 aa). C58 and C74 are disulfide-bonded. Residues H73 and D121 each act as charge relay system in the active site. Intrachain disulfides connect C155–C222, C186–C202, and C212–C243. The active-site Charge relay system is the S216.

The protein belongs to the peptidase S1 family. Elastase subfamily. As to expression, pancreas.

The protein resides in the secreted. The enzyme catalyses Preferential cleavage: Leu-|-Xaa, Met-|-Xaa and Phe-|-Xaa. Hydrolyzes elastin.. Acts upon elastin. This is Chymotrypsin-like elastase family member 2B (CELA2B) from Homo sapiens (Human).